The chain runs to 329 residues: MVVMNKTNLLLLILSLFLAINLSSAQLRGDFYAGTCPNVEQIVRNAVQKKIQQTFTTIPATLRLYFHDCFVNGCDASVMIASTNTNKAEKDHEDNLSLAGDGFDTVIKAKEAVDAVPNCRNKVSCADILTMATRDVVNLAGGPQYAVELGRRDGLSSSASSVTGKLPKPTFDLNQLNALFAENGLSPNDMIALSGAHTLGFAHCTKVFNRLYNFNKTNNVDPTINKDYVTELKASCPQNIDPRVAINMDPNTPRQFDNVYYKNLQQGKGLFTSDQVLFTDSRSKPTVDLWANNGQLFNQAFISSMIKLGRVGVKTGSNGNIRRDCGAFN.

Positions 1–25 (MVVMNKTNLLLLILSLFLAINLSSA) are cleaved as a signal peptide. Cystine bridges form between Cys-36/Cys-119, Cys-69/Cys-74, Cys-125/Cys-325, and Cys-204/Cys-236. The active-site Proton acceptor is the His-67. Ca(2+) is bound by residues Asp-68, Val-71, Gly-73, Asp-75, and Ser-77. Residue Pro-167 coordinates substrate. Residue His-197 participates in heme b binding. Thr-198 contributes to the Ca(2+) binding site. An N-linked (GlcNAc...) asparagine glycan is attached at Asn-215. 3 residues coordinate Ca(2+): Asp-249, Thr-252, and Asp-257.

The protein belongs to the peroxidase family. Classical plant (class III) peroxidase subfamily. Heme b serves as cofactor. Ca(2+) is required as a cofactor.

The protein localises to the secreted. It carries out the reaction 2 a phenolic donor + H2O2 = 2 a phenolic radical donor + 2 H2O. Removal of H(2)O(2), oxidation of toxic reductants, biosynthesis and degradation of lignin, suberization, auxin catabolism, response to environmental stresses such as wounding, pathogen attack and oxidative stress. These functions might be dependent on each isozyme/isoform in each plant tissue. The protein is Peroxidase 51 (PER51) of Arabidopsis thaliana (Mouse-ear cress).